Reading from the N-terminus, the 142-residue chain is Natriuretic peptides A (142 aa).

Positions 1-23 (MMLKTVIYTGVLFLICNKVLVRA) are cleaved as a signal peptide. The propeptide occupies 24 to 112 (DPLYSPYSSK…RLRDLLMAPR (89 aa)). The tract at residues 47–123 (DTLGQDEGND…NRGSSGCFGS (77 aa)) is disordered. The span at 77–94 (WDRERERQWPASDYKKPQ) shows a compositional bias: basic and acidic residues. C120 and C136 are joined by a disulfide.

It belongs to the natriuretic peptide family. Post-translationally, cleaved upon secretion to produce the functional hormone. As to expression, expressed in heart atrium and to a lower extent in heart ventricle, but not in brain.

Its subcellular location is the secreted. Its function is as follows. Hormone playing a key role in cardiovascular homeostasis through regulation of natriuresis, diuresis, and vasodilation. Has a cGMP-stimulating activity. This chain is Natriuretic peptides A (nppa), found in Acipenser transmontanus (White sturgeon).